Consider the following 389-residue polypeptide: Phospho-N-acetylmuramoyl-pentapeptide-transferase (389 aa).

10 helical membrane-spanning segments follow: residues 25–45 (RAVMATITALGIGLVCGPWVI), 73–93 (TMGGVLILIGIAVATLLWGDL), 97–117 (FIWIVMLVTFGFGVIGWVDDY), 135–155 (FWQSVIGLFAAVYLAFSVSEA), 190–210 (ISYPLGVWGFIVLTYFVIVGA), 222–242 (GLVIMPVVLVGASLGVFAYVM), 258–278 (GAGELLIFCSAMGGAGLAFLW), 286–306 (VFMGDVGALALGGALGTVAVI), 311–331 (IVLFIMGGIFVAETLSVMLQV), and 366–386 (QVVVRFWIITLMLCLFGLSTL).

The protein belongs to the glycosyltransferase 4 family. MraY subfamily. The cofactor is Mg(2+).

It is found in the cell inner membrane. The enzyme catalyses UDP-N-acetyl-alpha-D-muramoyl-L-alanyl-gamma-D-glutamyl-meso-2,6-diaminopimeloyl-D-alanyl-D-alanine + di-trans,octa-cis-undecaprenyl phosphate = di-trans,octa-cis-undecaprenyl diphospho-N-acetyl-alpha-D-muramoyl-L-alanyl-D-glutamyl-meso-2,6-diaminopimeloyl-D-alanyl-D-alanine + UMP. It functions in the pathway cell wall biogenesis; peptidoglycan biosynthesis. Its function is as follows. Catalyzes the initial step of the lipid cycle reactions in the biosynthesis of the cell wall peptidoglycan: transfers peptidoglycan precursor phospho-MurNAc-pentapeptide from UDP-MurNAc-pentapeptide onto the lipid carrier undecaprenyl phosphate, yielding undecaprenyl-pyrophosphoryl-MurNAc-pentapeptide, known as lipid I. This chain is Phospho-N-acetylmuramoyl-pentapeptide-transferase, found in Burkholderia vietnamiensis (strain G4 / LMG 22486) (Burkholderia cepacia (strain R1808)).